Here is an 801-residue protein sequence, read N- to C-terminus: Protocadherin beta-8 (801 aa).

The signal sequence occupies residues 1–29; the sequence is MEASGKLICRQRQVLFSFLLLGLSLAGAA. Residues 30-691 lie on the Extracellular side of the membrane; that stretch reads EPRSYSVVEE…GQADSLTVYL (662 aa). 5 Cadherin domains span residues 36-134, 139-243, 248-348, 353-452, and 457-562; these read VVEE…SPVF, MLVK…APEF, YRVQ…APEV, FTSP…APAF, and YTLF…SPFV. Cys97 and Cys103 are oxidised to a cystine. Residues Asn419 and Asn437 are each glycosylated (N-linked (GlcNAc...) asparagine). Residue Asn568 is glycosylated (N-linked (GlcNAc...) asparagine). One can recognise a Cadherin 6 domain in the interval 569–672; that stretch reads GSAPCTELVP…LVDGFSQPYL (104 aa). Residues 692–710 form a helical membrane-spanning segment; it reads VVALASVSSLFLFSVLLFV. Over 711-801 the chain is Cytoplasmic; it reads AVLLCRRSRA…NGFGFSLQLK (91 aa).

Forms homodimers in trans (molecules expressed by two different cells). Forms promiscuous heterodimers in cis (at the plasma membrane of the same cell) with other protocadherins.

The protein localises to the cell membrane. Its function is as follows. Calcium-dependent cell-adhesion protein involved in cells self-recognition and non-self discrimination. Thereby, it is involved in the establishment and maintenance of specific neuronal connections in the brain. The protein is Protocadherin beta-8 of Homo sapiens (Human).